A 340-amino-acid chain; its full sequence is Beta-1,3-N-acetylglucosaminyltransferase radical fringe (340 aa).

At 1–4 (MKIT) the chain is on the cytoplasmic side. Residues 5–25 (YVGLIKVCFLVFLLLCATVLL) form a helical; Signal-anchor for type II membrane protein membrane-spanning segment. At 26–340 (NISWRQRDSS…AFSLAEDPTR (315 aa)) the chain is on the lumenal side. An N-linked (GlcNAc...) asparagine glycan is attached at N42. A substrate-binding site is contributed by R110. N149 is a glycosylation site (N-linked (GlcNAc...) asparagine). 2 disulfides stabilise this stretch: C150–C161 and C179–C242. D183 is a binding site for substrate. Mn(2+) is bound at residue D184. Residue D272 is part of the active site. Position 296 (H296) interacts with Mn(2+).

Belongs to the glycosyltransferase 31 family. Requires Mn(2+) as cofactor.

It localises to the golgi apparatus membrane. It carries out the reaction 3-O-(alpha-L-fucosyl)-L-threonyl-[EGF-like domain protein] + UDP-N-acetyl-alpha-D-glucosamine = 3-O-(N-acetyl-beta-D-glucosaminyl-(1-&gt;3)-alpha-L-fucosyl)-L-threonyl-[EGF-like domain protein] + UDP + H(+). The enzyme catalyses 3-O-(alpha-L-fucosyl)-L-seryl-[EGF-like domain protein] + UDP-N-acetyl-alpha-D-glucosamine = 3-O-(N-acetyl-beta-D-glucosaminyl-(1-&gt;3)-alpha-L-fucosyl)-L-seryl-[EGF-like domain protein] + UDP + H(+). Its function is as follows. Glycosyltransferase that initiates the elongation of O-linked fucose residues attached to EGF-like repeats in the extracellular domain of Notch molecules. The sequence is that of Beta-1,3-N-acetylglucosaminyltransferase radical fringe (rfng) from Xenopus laevis (African clawed frog).